A 525-amino-acid chain; its full sequence is NGFI-A-binding protein 2 (525 aa).

Residues M1–T22 are disordered. S6 carries the phosphoserine modification. The interval A35–F113 is NCD1. The segment at G135–L237 is disordered. S157, S159, S162, and S171 each carry phosphoserine. Residues A212 to P234 are compositionally biased toward gly residues. An NCD2 region spans residues L267–Y356. The segment at E353 to E384 is necessary for nuclear localization. K379 participates in a covalent cross-link: Glycyl lysine isopeptide (Lys-Gly) (interchain with G-Cter in SUMO1). Residues Q380–S416 are disordered. Phosphoserine is present on S479. Residues P502 to Q525 form a disordered region. Positions E510–Q525 are enriched in basic and acidic residues. K517 participates in a covalent cross-link: Glycyl lysine isopeptide (Lys-Gly) (interchain with G-Cter in SUMO1); alternate. A Glycyl lysine isopeptide (Lys-Gly) (interchain with G-Cter in SUMO2); alternate cross-link involves residue K517.

This sequence belongs to the NAB family. In terms of assembly, homomultimers may associate with EGR1 bound to DNA. Post-translationally, sumoylation by EGR2 represses EGR2 transcriptional activity in hindbrain. Widely expressed at low levels. Highly expressed in melanoma cell lines.

Its subcellular location is the nucleus. Functionally, acts as a transcriptional repressor for zinc finger transcription factors EGR1 and EGR2. Isoform 2 lacks repression ability. In Homo sapiens (Human), this protein is NGFI-A-binding protein 2 (NAB2).